Here is a 347-residue protein sequence, read N- to C-terminus: Heme A synthase (347 aa).

The next 8 membrane-spanning stretches (helical) occupy residues 14–34 (VKIW…IGGI), 96–116 (FHRL…LYFM), 129–149 (FILI…MVKS), 162–182 (LAMH…HFLL), 199–219 (VFYI…LVAG), 260–280 (FIHE…LLVL), 287–307 (MYLL…TFIY), and 311–331 (IILA…SIYL). A heme-binding site is contributed by histidine 262. Position 317 (histidine 317) interacts with heme.

The protein belongs to the COX15/CtaA family. Type 2 subfamily. Interacts with CtaB. Requires heme b as cofactor.

It localises to the cell membrane. The catalysed reaction is Fe(II)-heme o + 2 A + H2O = Fe(II)-heme a + 2 AH2. It participates in porphyrin-containing compound metabolism; heme A biosynthesis; heme A from heme O: step 1/1. In terms of biological role, catalyzes the conversion of heme O to heme A by two successive hydroxylations of the methyl group at C8. The first hydroxylation forms heme I, the second hydroxylation results in an unstable dihydroxymethyl group, which spontaneously dehydrates, resulting in the formyl group of heme A. In Ehrlichia ruminantium (strain Gardel), this protein is Heme A synthase.